The sequence spans 205 residues: Large ribosomal subunit protein bL25 (205 aa).

The protein belongs to the bacterial ribosomal protein bL25 family. CTC subfamily. In terms of assembly, part of the 50S ribosomal subunit; part of the 5S rRNA/L5/L18/L25 subcomplex. Contacts the 5S rRNA. Binds to the 5S rRNA independently of L5 and L18.

In terms of biological role, this is one of the proteins that binds to the 5S RNA in the ribosome where it forms part of the central protuberance. The sequence is that of Large ribosomal subunit protein bL25 from Stutzerimonas stutzeri (strain A1501) (Pseudomonas stutzeri).